The primary structure comprises 548 residues: Probable thiamine biosynthetic bifunctional enzyme, chloroplastic (548 aa).

The span at 1-10 shows a compositional bias: polar residues; sequence MAAAPQQSVH. A disordered region spans residues 1–40; that stretch reads MAAAPQQSVHPSLPSSTSTLRLLISSSPRRPPPPPPRARR. A chloroplast-targeting transit peptide spans 1 to 47; the sequence is MAAAPQQSVHPSLPSSTSTLRLLISSSPRRPPPPPPRARRYNRLAAS. Positions 11–28 are enriched in low complexity; it reads PSLPSSTSTLRLLISSSP. 4-amino-2-methyl-5-(diphosphooxymethyl)pyrimidine is bound by residues 372–376 and Asn404; that span reads QLREK. Mg(2+)-binding residues include Asp405 and Asp424. Position 443 (Ser443) interacts with 4-amino-2-methyl-5-(diphosphooxymethyl)pyrimidine. 469–471 is a binding site for 2-[(2R,5Z)-2-carboxy-4-methylthiazol-5(2H)-ylidene]ethyl phosphate; it reads TST. Lys472 serves as a coordination point for 4-amino-2-methyl-5-(diphosphooxymethyl)pyrimidine. Residues Gly499 and 522 to 523 each bind 2-[(2R,5Z)-2-carboxy-4-methylthiazol-5(2H)-ylidene]ethyl phosphate; that span reads VS.

It belongs to the thiamine-phosphate synthase family. It depends on Mg(2+) as a cofactor.

It localises to the plastid. The protein localises to the chloroplast. It catalyses the reaction 2-[(2R,5Z)-2-carboxy-4-methylthiazol-5(2H)-ylidene]ethyl phosphate + 4-amino-2-methyl-5-(diphosphooxymethyl)pyrimidine + 2 H(+) = thiamine phosphate + CO2 + diphosphate. The catalysed reaction is 2-(2-carboxy-4-methylthiazol-5-yl)ethyl phosphate + 4-amino-2-methyl-5-(diphosphooxymethyl)pyrimidine + 2 H(+) = thiamine phosphate + CO2 + diphosphate. The enzyme catalyses 4-methyl-5-(2-phosphooxyethyl)-thiazole + 4-amino-2-methyl-5-(diphosphooxymethyl)pyrimidine + H(+) = thiamine phosphate + diphosphate. It carries out the reaction 4-amino-5-hydroxymethyl-2-methylpyrimidine + ATP = 4-amino-2-methyl-5-(phosphooxymethyl)pyrimidine + ADP + H(+). Its pathway is cofactor biosynthesis; thiamine diphosphate biosynthesis; thiamine phosphate from 4-amino-2-methyl-5-diphosphomethylpyrimidine and 4-methyl-5-(2-phosphoethyl)-thiazole: step 1/1. The protein operates within cofactor biosynthesis; thiamine diphosphate biosynthesis; 4-amino-2-methyl-5-diphosphomethylpyrimidine from 5-amino-1-(5-phospho-D-ribosyl)imidazole: step 2/3. Essential for thiamine biosynthesis. Bifunctional enzyme that catalyzes the phosphorylation of hydroxymethylpyrimidine phosphate (HMP-P) to HMP-PP and condenses 4-methyl-5-(beta-hydroxyethyl)thiazole monophosphate (THZ-P) and 2-methyl-4-amino-5-hydroxymethyl pyrimidine pyrophosphate (HMP-PP) to form thiamine monophosphate (TMP). In Oryza sativa subsp. japonica (Rice), this protein is Probable thiamine biosynthetic bifunctional enzyme, chloroplastic.